Consider the following 133-residue polypeptide: Ribonuclease P protein component (133 aa).

The disordered stretch occupies residues 114–133 (RSRPTPEEKSEPAGVDSTDA).

The protein belongs to the RnpA family. Consists of a catalytic RNA component (M1 or rnpB) and a protein subunit.

It catalyses the reaction Endonucleolytic cleavage of RNA, removing 5'-extranucleotides from tRNA precursor.. Functionally, RNaseP catalyzes the removal of the 5'-leader sequence from pre-tRNA to produce the mature 5'-terminus. It can also cleave other RNA substrates such as 4.5S RNA. The protein component plays an auxiliary but essential role in vivo by binding to the 5'-leader sequence and broadening the substrate specificity of the ribozyme. This Pseudomonas syringae pv. tomato (strain ATCC BAA-871 / DC3000) protein is Ribonuclease P protein component.